The chain runs to 497 residues: Glycerol kinase (497 aa).

Position 12 (Thr12) interacts with ADP. Thr12, Thr13, and Ser14 together coordinate ATP. Residue Thr12 participates in sn-glycerol 3-phosphate binding. Arg16 is an ADP binding site. Sn-glycerol 3-phosphate is bound by residues Arg82, Glu83, Tyr134, and Asp243. Residues Arg82, Glu83, Tyr134, Asp243, and Gln244 each coordinate glycerol. ADP is bound by residues Thr265 and Gly308. Thr265, Gly308, Gln312, and Gly409 together coordinate ATP. ADP-binding residues include Gly409 and Asn413.

Belongs to the FGGY kinase family.

The enzyme catalyses glycerol + ATP = sn-glycerol 3-phosphate + ADP + H(+). It functions in the pathway polyol metabolism; glycerol degradation via glycerol kinase pathway; sn-glycerol 3-phosphate from glycerol: step 1/1. Its activity is regulated as follows. Inhibited by fructose 1,6-bisphosphate (FBP). Functionally, key enzyme in the regulation of glycerol uptake and metabolism. Catalyzes the phosphorylation of glycerol to yield sn-glycerol 3-phosphate. The chain is Glycerol kinase from Oleidesulfovibrio alaskensis (strain ATCC BAA-1058 / DSM 17464 / G20) (Desulfovibrio alaskensis).